The primary structure comprises 539 residues: CTP synthase (539 aa).

The segment at 1–268 (MSFKSIFLTG…SDFLLNKLGF (268 aa)) is amidoligase domain. S14 serves as a coordination point for CTP. Residue S14 participates in UTP binding. 15 to 20 (SLGKGL) contacts ATP. Residue Y55 coordinates L-glutamine. ATP is bound at residue D72. Mg(2+) is bound by residues D72 and E142. CTP-binding positions include 149–151 (DIE), 188–193 (KTKPTQ), and K224. UTP-binding positions include 188 to 193 (KTKPTQ) and K224. In terms of domain architecture, Glutamine amidotransferase type-1 spans 294–532 (RIGLVGKYLE…IRAAKAYSLE (239 aa)). Position 353 (G353) interacts with L-glutamine. C380 acts as the Nucleophile; for glutamine hydrolysis in catalysis. L-glutamine-binding positions include 381-384 (LGMQ), E404, and R460. Residues H505 and E507 contribute to the active site.

Belongs to the CTP synthase family. As to quaternary structure, homotetramer.

It carries out the reaction UTP + L-glutamine + ATP + H2O = CTP + L-glutamate + ADP + phosphate + 2 H(+). It catalyses the reaction L-glutamine + H2O = L-glutamate + NH4(+). The enzyme catalyses UTP + NH4(+) + ATP = CTP + ADP + phosphate + 2 H(+). Its pathway is pyrimidine metabolism; CTP biosynthesis via de novo pathway; CTP from UDP: step 2/2. Its activity is regulated as follows. Allosterically activated by GTP, when glutamine is the substrate; GTP has no effect on the reaction when ammonia is the substrate. The allosteric effector GTP functions by stabilizing the protein conformation that binds the tetrahedral intermediate(s) formed during glutamine hydrolysis. Inhibited by the product CTP, via allosteric rather than competitive inhibition. In terms of biological role, catalyzes the ATP-dependent amination of UTP to CTP with either L-glutamine or ammonia as the source of nitrogen. Regulates intracellular CTP levels through interactions with the four ribonucleotide triphosphates. The sequence is that of CTP synthase from Chlamydia trachomatis serovar A (strain ATCC VR-571B / DSM 19440 / HAR-13).